A 289-amino-acid chain; its full sequence is Type III pantothenate kinase (289 aa).

9-16 (DAGNSRVK) is a binding site for ATP. Residues tyrosine 106 and 113-116 (GSDR) contribute to the substrate site. Aspartate 115 acts as the Proton acceptor in catalysis. Position 139 (threonine 139) interacts with ATP. Threonine 209 provides a ligand contact to substrate.

This sequence belongs to the type III pantothenate kinase family. In terms of assembly, homodimer. NH4(+) is required as a cofactor. K(+) serves as cofactor.

Its subcellular location is the cytoplasm. It carries out the reaction (R)-pantothenate + ATP = (R)-4'-phosphopantothenate + ADP + H(+). It functions in the pathway cofactor biosynthesis; coenzyme A biosynthesis; CoA from (R)-pantothenate: step 1/5. In terms of biological role, catalyzes the phosphorylation of pantothenate (Pan), the first step in CoA biosynthesis. This is Type III pantothenate kinase from Paraburkholderia phymatum (strain DSM 17167 / CIP 108236 / LMG 21445 / STM815) (Burkholderia phymatum).